The chain runs to 172 residues: Large ribosomal subunit protein uL10 (172 aa).

Belongs to the universal ribosomal protein uL10 family. Part of the ribosomal stalk of the 50S ribosomal subunit. The N-terminus interacts with L11 and the large rRNA to form the base of the stalk. The C-terminus forms an elongated spine to which L12 dimers bind in a sequential fashion forming a multimeric L10(L12)X complex.

Forms part of the ribosomal stalk, playing a central role in the interaction of the ribosome with GTP-bound translation factors. This is Large ribosomal subunit protein uL10 from Ruegeria pomeroyi (strain ATCC 700808 / DSM 15171 / DSS-3) (Silicibacter pomeroyi).